A 554-amino-acid polypeptide reads, in one-letter code: (+)-delta-cadinene synthase isozyme XC1 (554 aa).

A compositionally biased stretch (low complexity) spans Met1–Ser16. The disordered stretch occupies residues Met1–Pro23. The Mg(2+) site is built by Asp307, Asp311, Asp451, and Glu455. Positions Asp307–Asp311 match the DDXXD motif motif.

It belongs to the terpene synthase family. Mg(2+) is required as a cofactor.

It catalyses the reaction (2E,6E)-farnesyl diphosphate = (1S,8aR)-delta-cadinene + diphosphate. Its pathway is secondary metabolite biosynthesis; terpenoid biosynthesis. Its function is as follows. Responsible for the cyclization of trans,trans-farnesyl diphosphate (FPP) to (+)-delta cadinene. The sequence is that of (+)-delta-cadinene synthase isozyme XC1 from Gossypium arboreum (Tree cotton).